The chain runs to 206 residues: LexA repressor (206 aa).

A DNA-binding region (H-T-H motif) is located at residues 28–48 (VREIGEAVGLASSSTVHGHLS). Active-site for autocatalytic cleavage activity residues include serine 129 and lysine 167.

It belongs to the peptidase S24 family. Homodimer.

The enzyme catalyses Hydrolysis of Ala-|-Gly bond in repressor LexA.. Represses a number of genes involved in the response to DNA damage (SOS response), including recA and lexA. In the presence of single-stranded DNA, RecA interacts with LexA causing an autocatalytic cleavage which disrupts the DNA-binding part of LexA, leading to derepression of the SOS regulon and eventually DNA repair. This is LexA repressor from Staphylococcus epidermidis (strain ATCC 35984 / DSM 28319 / BCRC 17069 / CCUG 31568 / BM 3577 / RP62A).